Here is a 472-residue protein sequence, read N- to C-terminus: Membrane-bound acylglycerophosphatidylinositol O-acyltransferase MBOAT7 (472 aa).

Over 1-5 the chain is Cytoplasmic; sequence MSPEE. The chain crosses the membrane as a helical span at residues 6–22; sequence WTYLVVLLISIPIGFLF. The Lumenal segment spans residues 23-33; it reads KKAGPGLKRWG. Residues 34–57 traverse the membrane as a helical segment; sequence AAAVGLGLTLFTCGPHTLHSLVTI. The Cytoplasmic segment spans residues 58 to 73; that stretch reads LGTWALIQAQPCSCHA. Residues 74–93 traverse the membrane as a helical segment; the sequence is LALAWTFSYLLFFRALSLLG. The Lumenal portion of the chain corresponds to 94 to 194; sequence LPTPTPFTNA…VPSLRPLLRR (101 aa). A helical transmembrane segment spans residues 195 to 212; it reads AWPAPLFGLLFLLSSHLF. The Cytoplasmic portion of the chain corresponds to 213–231; it reads PLEAVREDAFYARPLPARL. Residues 232 to 261 traverse the membrane as a helical segment; the sequence is FYMIPVFFAFRMRFYVAWIAAECGCIAAGF. Residues 262–426 are Lumenal-facing; that stretch reads GAYPVAAKAR…LSLADTLRYW (165 aa). N321 carries N-linked (GlcNAc...) asparagine glycosylation. The chain crosses the membrane as a helical span at residues 427-447; the sequence is ASIYFCIHFLALAALGLGLAL. Over 448-472 the chain is Cytoplasmic; it reads GGGSPSRRKAASQPTSLAPEKLREE. Residues 453–472 form a disordered region; sequence SRRKAASQPTSLAPEKLREE.

The protein belongs to the membrane-bound acyltransferase family. In terms of assembly, interacts with SPTSSA; the interaction facilitates MBOAT7 location to mitochondria-associated membranes (MAMs). In terms of tissue distribution, overexpressed in metastatic breast and bladder carcinomas relative to normal breast epithelium and urothelium.

The protein resides in the endoplasmic reticulum membrane. The catalysed reaction is a 1-acyl-sn-glycero-3-phospho-(1D-myo-inositol) + (5Z,8Z,11Z,14Z)-eicosatetraenoyl-CoA = a 1-acyl-2-(5Z,8Z,11Z,14Z-eicosatetraenoyl)-sn-glycero-3-phospho-(1D-myo-inositol) + CoA. It carries out the reaction (5Z,8Z,11Z,14Z)-eicosatetraenoyl-CoA + 1-hexadecanoyl-sn-glycero-3-phosphocholine = 1-hexadecanoyl-2-(5Z,8Z,11Z,14Z-eicosatetraenoyl)-sn-glycero-3-phosphocholine + CoA. It catalyses the reaction a 1-acyl-sn-glycero-3-phospho-(1D-myo-inositol) + an acyl-CoA = a 1,2-diacyl-sn-glycero-3-phospho-(1D-myo-inositol) + CoA. The enzyme catalyses 1-octadecanoyl-sn-glycero-3-phospho-(1D-myo-inositol) + (5Z,8Z,11Z,14Z)-eicosatetraenoyl-CoA = 1-octadecanoyl-2-(5Z,8Z,11Z,14Z-eicosatetraenoyl)-sn-glycero-3-phospho-(1D-myo-inositol) + CoA. The protein operates within lipid metabolism; phospholipid metabolism. With respect to regulation, activity is inhibited by thimerosal. Its function is as follows. Acyltransferase which catalyzes the transfer of an acyl group from an acyl-CoA to a lysophosphatidylinositol (1-acylglycerophosphatidylinositol or LPI) leading to the production of a phosphatidylinositol (1,2-diacyl-sn-glycero-3-phosphoinositol or PI) and participates in the reacylation step of the phospholipid remodeling pathway also known as the Lands cycle. Prefers arachidonoyl-CoA as the acyl donor, thus contributing to the regulation of free levels arachidonic acid in cell. In liver, participates in the regulation of triglyceride metabolism through the phosphatidylinositol acyl-chain remodeling regulation. This Homo sapiens (Human) protein is Membrane-bound acylglycerophosphatidylinositol O-acyltransferase MBOAT7.